Consider the following 85-residue polypeptide: Translational regulator CsrA (85 aa).

It belongs to the CsrA/RsmA family. As to quaternary structure, homodimer; the beta-strands of each monomer intercalate to form a hydrophobic core, while the alpha-helices form wings that extend away from the core.

The protein resides in the cytoplasm. Its function is as follows. A translational regulator that binds mRNA to regulate translation initiation and/or mRNA stability. Usually binds in the 5'-UTR at or near the Shine-Dalgarno sequence preventing ribosome-binding, thus repressing translation. Its main target seems to be the major flagellin gene, while its function is anatagonized by FliW. This chain is Translational regulator CsrA, found in Leifsonia xyli subsp. xyli (strain CTCB07).